A 1876-amino-acid chain; its full sequence is Phenolphthiocerol/phthiocerol polyketide synthase subunit A (1876 aa).

The Carrier 1 domain maps to 9–83 (ADLRHWLIDY…ALAAYLAAPE (75 aa)). Ser-43 carries the O-(pantetheine 4'-phosphoryl)serine modification. A Ketosynthase family 3 (KS3) domain is found at 101 to 526 (DEPIAVVGMG…GTNAHVVIEQ (426 aa)). Residues Cys-273, His-408, and His-448 each act as for beta-ketoacyl synthase activity in the active site. The interval 626 to 950 (SPGPGTVFVY…NLNKAHTIHP (325 aa)) is acyltransferase. Ser-720 functions as the For malonyltransferase activity in the catalytic mechanism. An N-terminal hotdog fold region spans residues 997-1112 (HTTVATVSAS…AQLSSSPSDS (116 aa)). Positions 997-1267 (HTTVATVSAS…YRALDFGLDV (271 aa)) constitute a PKS/mFAS DH domain. His-1027 (proton acceptor; for dehydratase activity) is an active-site residue. Residues 1102–1130 (TAQLSSSPSDSASSLNEHHRANGQPPERA) are disordered. The span at 1106-1115 (SSSPSDSASS) shows a compositional bias: low complexity. The tract at residues 1130–1267 (AHRDLIPDLA…YRALDFGLDV (138 aa)) is C-terminal hotdog fold. Catalysis depends on Asp-1186, which acts as the Proton donor; for dehydratase activity. Residue 1491 to 1551 (AAYLITGGLG…RRRIDAIRAL (61 aa)) coordinates NADP(+). Residues 1491-1728 (AAYLITGGLG…DGYDVAQAVV (238 aa)) are beta-ketoacyl reductase. The Carrier 2 domain maps to 1759–1836 (EVRSELEQGL…SLASYLAKRV (78 aa)). Ser-1796 carries the post-translational modification O-(pantetheine 4'-phosphoryl)serine.

Requires NADP(+) as cofactor. It depends on pantetheine 4'-phosphate as a cofactor.

The enzyme catalyses icosanoyl-[(phenol)carboxyphthiodiolenone synthase] + 2 (S)-methylmalonyl-CoA + 3 malonyl-CoA + 5 NADPH + 10 H(+) = C32-carboxyphthiodiolenone-[(phenol)carboxyphthiodiolenone synthase] + 5 CO2 + 5 NADP(+) + 5 CoA + 2 H2O. It carries out the reaction docosanoyl-[(phenol)carboxyphthiodiolenone synthase] + 2 (S)-methylmalonyl-CoA + 3 malonyl-CoA + 5 NADPH + 10 H(+) = C34-carboxyphthiodiolenone-[(phenol)carboxyphthiodiolenone synthase] + 5 CO2 + 5 NADP(+) + 5 CoA + 2 H2O. It catalyses the reaction 17-(4-hydroxyphenyl)heptadecanoyl-[(phenol)carboxyphthiodiolenone synthase] + 2 (S)-methylmalonyl-CoA + 3 malonyl-CoA + 5 NADPH + 10 H(+) = C35-(phenol)carboxyphthiodiolenone-[(phenol)carboxyphthiodiolenone synthase] + 5 CO2 + 5 NADP(+) + 5 CoA + 2 H2O. The catalysed reaction is 19-(4-hydroxyphenyl)nonadecanoyl-[(phenol)carboxyphthiodiolenone synthase] + 2 (S)-methylmalonyl-CoA + 3 malonyl-CoA + 5 NADPH + 10 H(+) = C37-(phenol)carboxyphthiodiolenone-[(phenol)carboxyphthiodiolenone synthase] + 5 CO2 + 5 NADP(+) + 5 CoA + 2 H2O. It functions in the pathway lipid metabolism; fatty acid biosynthesis. In terms of biological role, part of the PpsABCDE complex involved in the biosynthesis of the lipid core common to phthiocerols and phenolphthiocerols by successive additions of malonyl-CoA or methylmalonyl-CoA extender units. PpsA can accept as substrate the activated forms of either icosanoyl (C20), docosanoyl (C22) or lignoceroyl (C24) groups from FadD26, or a (4-hydroxyphenyl)-C17 or (4-hydroxyphenyl)-C19 fatty acyl from FadD29. PpsA initiates the biosynthesis and extends its substrate using a malonyl-CoA extender unit. The PpsB and PpsC proteins add the second and third malonyl-CoA extender units. PpsD adds an (R)-methylmalonyl unit and PpsE adds a second (R)-methylmalonyl unit. The incorporation of the methylmalonyl units results in formation of two branched methyl groups in the elongated product. The protein is Phenolphthiocerol/phthiocerol polyketide synthase subunit A (ppsA) of Mycobacterium tuberculosis (strain CDC 1551 / Oshkosh).